We begin with the raw amino-acid sequence, 228 residues long: MKFAVIVFPGSNCDVDMYHAIADELGEEVEYVWHDAENLDRFDAILLPGGFSYGDYLRSGAIARFSNVMKAVKKAADEGKPVLGVCNGFQILLEAGLLPGAMRRNNSLKFICRPVSLRVENNETMFTSAYKQGEVITIPIAHGEGNYYCDEQTLKRLIENRQIVFRYHGENPNGSLDDIAGIVNEKGNVLGMMPHPERAVDSLLGSADGLKLFQSIVKYWRETHVVTA.

Residues 3-226 enclose the Glutamine amidotransferase type-1 domain; the sequence is FAVIVFPGSN…VKYWRETHVV (224 aa). Cysteine 86 acts as the Nucleophile in catalysis. Residues histidine 195 and glutamate 197 contribute to the active site.

Part of the FGAM synthase complex composed of 1 PurL, 1 PurQ and 2 PurS subunits.

It localises to the cytoplasm. The catalysed reaction is N(2)-formyl-N(1)-(5-phospho-beta-D-ribosyl)glycinamide + L-glutamine + ATP + H2O = 2-formamido-N(1)-(5-O-phospho-beta-D-ribosyl)acetamidine + L-glutamate + ADP + phosphate + H(+). It catalyses the reaction L-glutamine + H2O = L-glutamate + NH4(+). The protein operates within purine metabolism; IMP biosynthesis via de novo pathway; 5-amino-1-(5-phospho-D-ribosyl)imidazole from N(2)-formyl-N(1)-(5-phospho-D-ribosyl)glycinamide: step 1/2. Functionally, part of the phosphoribosylformylglycinamidine synthase complex involved in the purines biosynthetic pathway. Catalyzes the ATP-dependent conversion of formylglycinamide ribonucleotide (FGAR) and glutamine to yield formylglycinamidine ribonucleotide (FGAM) and glutamate. The FGAM synthase complex is composed of three subunits. PurQ produces an ammonia molecule by converting glutamine to glutamate. PurL transfers the ammonia molecule to FGAR to form FGAM in an ATP-dependent manner. PurS interacts with PurQ and PurL and is thought to assist in the transfer of the ammonia molecule from PurQ to PurL. The protein is Phosphoribosylformylglycinamidine synthase subunit PurQ of Geobacillus sp. (strain WCH70).